Here is a 242-residue protein sequence, read N- to C-terminus: Large ribosomal subunit protein uL1 (242 aa).

Belongs to the universal ribosomal protein uL1 family. As to quaternary structure, part of the 50S ribosomal subunit.

Its function is as follows. Binds directly to 23S rRNA. The L1 stalk is quite mobile in the ribosome, and is involved in E site tRNA release. In terms of biological role, protein L1 is also a translational repressor protein, it controls the translation of the L11 operon by binding to its mRNA. This Sulfurihydrogenibium sp. (strain YO3AOP1) protein is Large ribosomal subunit protein uL1.